The sequence spans 329 residues: Sex comb on midleg-like protein 1 (329 aa).

The segment at Asn-125–Pro-194 is disordered. Ser-138 is subject to Phosphoserine. Residues Phe-159–Glu-168 show a composition bias toward basic and acidic residues. The residue at position 238 (Ser-238) is a Phosphoserine. In terms of domain architecture, SAM spans Trp-258–Lys-325.

The protein belongs to the SCM family. As to expression, highly expressed in testis and pancreas. Preferentially expressed in the germ stem cells of testis.

The protein localises to the nucleus. Putative Polycomb group (PcG) protein. PcG proteins act by forming multiprotein complexes, which are required to maintain the transcriptionally repressive state of homeotic genes throughout development. May be involved in spermatogenesis during sexual maturation. This chain is Sex comb on midleg-like protein 1 (SCML1), found in Macaca mulatta (Rhesus macaque).